A 252-amino-acid chain; its full sequence is MTDLIRQGALFLMSEKCYDNYFLYHNFLDVPCFKALLSKGLGLAIIAGSVLVKVPQVLKILNSKSGEGINIVGVVLDLLAISFHLSYNFMHGYPFSAWGDSTFLAIQTVTIAVLVLFFNGRKAQSGLFLVGYVVLMYVLNSGLTPMSVLFTIQSCNIPILLVGKLSQAYTNYQAGSTGQLSAATVIMMFAGSVARIFTSIQETGDFMIILTFIASTFANSVILGQLIYYWNKPAGVKVKDSKAKKPKTKKDD.

Residues 34-100 form the PQ-loop 1 domain; sequence KALLSKGLGL…HGYPFSAWGD (67 aa). Transmembrane regions (helical) follow at residues 41 to 61, 69 to 89, 98 to 118, 126 to 146, 148 to 168, 180 to 200, and 207 to 227; these read LGLA…LKIL, INIV…SYNF, WGDS…VLFF, GLFL…LTPM, VLFT…LSQA, LSAA…FTSI, and MIIL…GQLI. The 55-residue stretch at 157–211 folds into the PQ-loop 2 domain; it reads IPILLVGKLSQAYTNYQAGSTGQLSAATVIMMFAGSVARIFTSIQETGDFMIILT.

The protein belongs to the MPDU1 (TC 2.A.43.3) family.

Its subcellular location is the membrane. The sequence is that of Mannose-P-dolichol utilization defect 1 protein homolog from Drosophila melanogaster (Fruit fly).